A 152-amino-acid chain; its full sequence is UPF0756 membrane protein Moth_1009 (152 aa).

4 consecutive transmembrane segments (helical) span residues 5–25 (LIIL…VALA), 41–61 (IFPF…IAAI), 75–95 (LGHV…LITT), and 117–137 (LILG…GPFI).

It belongs to the UPF0756 family.

The protein resides in the cell membrane. The protein is UPF0756 membrane protein Moth_1009 of Moorella thermoacetica (strain ATCC 39073 / JCM 9320).